We begin with the raw amino-acid sequence, 364 residues long: Probable dual-specificity RNA methyltransferase RlmN (364 aa).

The active-site Proton acceptor is Glu107. The Radical SAM core domain maps to 113 to 346; the sequence is HEYGNSVCVT…ATIRREQGSD (234 aa). A disulfide bond links Cys120 and Cys351. 3 residues coordinate [4Fe-4S] cluster: Cys127, Cys131, and Cys134. S-adenosyl-L-methionine contacts are provided by residues 177-178, Ser209, 232-234, and Asn308; these read GE and SLH. Cys351 acts as the S-methylcysteine intermediate in catalysis.

It belongs to the radical SAM superfamily. RlmN family. [4Fe-4S] cluster serves as cofactor.

It is found in the cytoplasm. The catalysed reaction is adenosine(2503) in 23S rRNA + 2 reduced [2Fe-2S]-[ferredoxin] + 2 S-adenosyl-L-methionine = 2-methyladenosine(2503) in 23S rRNA + 5'-deoxyadenosine + L-methionine + 2 oxidized [2Fe-2S]-[ferredoxin] + S-adenosyl-L-homocysteine. It catalyses the reaction adenosine(37) in tRNA + 2 reduced [2Fe-2S]-[ferredoxin] + 2 S-adenosyl-L-methionine = 2-methyladenosine(37) in tRNA + 5'-deoxyadenosine + L-methionine + 2 oxidized [2Fe-2S]-[ferredoxin] + S-adenosyl-L-homocysteine. Its function is as follows. Specifically methylates position 2 of adenine 2503 in 23S rRNA and position 2 of adenine 37 in tRNAs. Confers resistance to some classes of antibiotics. The sequence is that of Probable dual-specificity RNA methyltransferase RlmN from Staphylococcus carnosus (strain TM300).